A 222-amino-acid chain; its full sequence is Phosphoribosylformylglycinamidine synthase subunit PurQ (222 aa).

The region spanning 3–222 is the Glutamine amidotransferase type-1 domain; that stretch reads AAVLVFPGSN…ASLAAALVAA (220 aa). C86 (nucleophile) is an active-site residue. Residues H194 and E196 contribute to the active site.

As to quaternary structure, part of the FGAM synthase complex composed of 1 PurL, 1 PurQ and 2 PurS subunits.

Its subcellular location is the cytoplasm. It catalyses the reaction N(2)-formyl-N(1)-(5-phospho-beta-D-ribosyl)glycinamide + L-glutamine + ATP + H2O = 2-formamido-N(1)-(5-O-phospho-beta-D-ribosyl)acetamidine + L-glutamate + ADP + phosphate + H(+). It carries out the reaction L-glutamine + H2O = L-glutamate + NH4(+). It participates in purine metabolism; IMP biosynthesis via de novo pathway; 5-amino-1-(5-phospho-D-ribosyl)imidazole from N(2)-formyl-N(1)-(5-phospho-D-ribosyl)glycinamide: step 1/2. Part of the phosphoribosylformylglycinamidine synthase complex involved in the purines biosynthetic pathway. Catalyzes the ATP-dependent conversion of formylglycinamide ribonucleotide (FGAR) and glutamine to yield formylglycinamidine ribonucleotide (FGAM) and glutamate. The FGAM synthase complex is composed of three subunits. PurQ produces an ammonia molecule by converting glutamine to glutamate. PurL transfers the ammonia molecule to FGAR to form FGAM in an ATP-dependent manner. PurS interacts with PurQ and PurL and is thought to assist in the transfer of the ammonia molecule from PurQ to PurL. The protein is Phosphoribosylformylglycinamidine synthase subunit PurQ of Jannaschia sp. (strain CCS1).